A 277-amino-acid polypeptide reads, in one-letter code: Acyl-coenzyme A thioesterase MBLAC2 (277 aa).

Residues H80, H82, D84, H85, H167, D186, and H228 each contribute to the Zn(2+) site.

The protein belongs to the metallo-beta-lactamase superfamily. Glyoxalase II family. Requires Zn(2+) as cofactor.

The protein resides in the endoplasmic reticulum membrane. The protein localises to the cell membrane. It catalyses the reaction hexadecanoyl-CoA + H2O = hexadecanoate + CoA + H(+). The catalysed reaction is dodecanoyl-CoA + H2O = dodecanoate + CoA + H(+). It carries out the reaction tetradecanoyl-CoA + H2O = tetradecanoate + CoA + H(+). The enzyme catalyses octadecanoyl-CoA + H2O = octadecanoate + CoA + H(+). It catalyses the reaction a beta-lactam + H2O = a substituted beta-amino acid. Its function is as follows. Acyl-CoA thioesterases are a group of enzymes that catalyze the hydrolysis of acyl-CoAs to the free fatty acid and coenzyme A (CoASH), providing the potential to regulate intracellular levels of acyl-CoAs, free fatty acids and CoASH. Has an acyl-CoA thioesterase activity towards the long chain fatty acyl-CoA thioester palmitoyl-CoA (hexadecanoyl-CoA; C16:0-CoA). Displays a substrate preference for fatty acyl-CoAs with chain-lengths C12-C18. The chain is Acyl-coenzyme A thioesterase MBLAC2 (MBLAC2) from Gallus gallus (Chicken).